Reading from the N-terminus, the 122-residue chain is Small ribosomal subunit protein uS13 (122 aa).

The disordered stretch occupies residues 95–122 (NLPVRGQRTHTNARTRKGKAKPIAGKKK).

The protein belongs to the universal ribosomal protein uS13 family. Part of the 30S ribosomal subunit. Forms a loose heterodimer with protein S19. Forms two bridges to the 50S subunit in the 70S ribosome.

Functionally, located at the top of the head of the 30S subunit, it contacts several helices of the 16S rRNA. In the 70S ribosome it contacts the 23S rRNA (bridge B1a) and protein L5 of the 50S subunit (bridge B1b), connecting the 2 subunits; these bridges are implicated in subunit movement. Contacts the tRNAs in the A and P-sites. This is Small ribosomal subunit protein uS13 from Methylobacterium nodulans (strain LMG 21967 / CNCM I-2342 / ORS 2060).